Consider the following 530-residue polypeptide: PC4 and SFRS1-interacting protein (530 aa).

Residues 1 to 64 (MTRDFKPGDL…PKDIFPYSEN (64 aa)) form the PWWP domain. Lys75 is covalently cross-linked (Glycyl lysine isopeptide (Lys-Gly) (interchain with G-Cter in SUMO2)). The disordered stretch occupies residues 88–349 (PKVKFSSQQA…VEKKRETSMD (262 aa)). Polar residues predominate over residues 92 to 104 (FSSQQAATKQSNA). 3 positions are modified to phosphoserine: Ser102, Ser105, and Ser106. Residues 113-135 (KETSVSKEDTDHEEKASNEDVTK) are compositionally biased toward basic and acidic residues. Thr115 and Thr122 each carry phosphothreonine. Ser129 is subject to Phosphoserine. Thr141 is subject to Phosphothreonine. Over residues 144–153 (AARRGRKRKA) the composition is skewed to basic residues. Positions 146–156 (RRGRKRKAEKQ) match the Nuclear localization signal motif. Thr167 bears the Phosphothreonine mark. Phosphoserine occurs at positions 177 and 206. Positions 213–261 (EEDKSKKKGQEEKQPKKQPKKDEEGQKEEDKPRKEPDKKEGKKEVESKR) are enriched in basic and acidic residues. Ser271 bears the Phosphoserine mark. At Thr272 the chain carries Phosphothreonine. Residues Ser273 and Ser275 each carry the phosphoserine modification. A compositionally biased stretch (acidic residues) spans 274–283 (DSEEEGDDQE). Residues 287 to 302 (KRKGGRNFQTAHRRNM) show a composition bias toward basic residues. A compositionally biased stretch (basic and acidic residues) spans 305–349 (GQHEKEAADRKRKQEEQMETEQQNKDEGKKPEVKKVEKKRETSMD). Coiled-coil stretches lie at residues 306–334 (QHEKEAADRKRKQEEQMETEQQNKDEGKK) and 371–395 (NRCIEALDELASLQVTMQQAQKHTE). The interval 340-417 (VEKKRETSMD…VSQVIMEKST (78 aa)) is integrase-binding domain (IBD). The residue at position 434 (Ser434) is a Phosphoserine. Residue Thr437 is modified to Phosphothreonine. The residue at position 443 (Ser443) is a Phosphoserine. Residues 446–473 (EQRQHEEANKTKDQGKKGPNKKLEKEQT) show a composition bias toward basic and acidic residues. The tract at residues 446 to 530 (EQRQHEEANK…ISLKDSTLDN (85 aa)) is disordered. The segment covering 474–494 (GSKTLNGGSDAQDGNQPQHNG) has biased composition (polar residues). Over residues 498 to 530 (EDSKDNHEASTKKKPSSEERETEISLKDSTLDN) the composition is skewed to basic and acidic residues. At Ser514 the chain carries Phosphoserine. Arg517 carries the post-translational modification Citrulline. Ser522 bears the Phosphoserine mark. Thr527 carries the phosphothreonine modification.

The protein belongs to the HDGF family. As to quaternary structure, monomer. Interacts with IFRD1/PC4. Isoform 2 interacts with SFRS1. Isoform 1 interacts (via IBD domain) with POGZ (via IBM motif) and CDCA7L (via IBM motifs). Interacts (via IBD domain) with KMT2A (via IBM motifs) with a moderate affinity whereas interacts with the KMT2A-MEN1 complex with a greater affinity; MEN1 enhances interaction of KMT2A with PSIP1. Interacts with fusion protein KMT2A-MLLT3. Interacts (via IBD domain) with IWS1 (via IBM motif), MED1 (via IBM motif) and DBF4 (via IBM motifs). In terms of assembly, (Microbial infection) Interacts (via IBD domain) with human HIV-1 integrase protein (HIV-1 IN), determining its nuclear localization, its tight association with chromatin and its protection from the proteasome. (Microbial infection) Interacts with HIV-2 IN. In terms of processing, citrullinated by PADI4. Widely expressed. Expressed at high level in the thymus. Expressed in fetal and adult brain. Expressed in neurons, but not astrocytes. Markedly elevated in fetal as compared to adult brain. In the adult brain, expressed in the subventricular zone (SVZ), in hippocampus, and undetectable elsewhere. In the fetal brain, expressed in the germinal neuroepithelium and cortical plate regions.

It localises to the nucleus. Transcriptional coactivator involved in neuroepithelial stem cell differentiation and neurogenesis. Involved in particular in lens epithelial cell gene regulation and stress responses. May play an important role in lens epithelial to fiber cell terminal differentiation. May play a protective role during stress-induced apoptosis. Isoform 2 is a more general and stronger transcriptional coactivator. Isoform 2 may also act as an adapter to coordinate pre-mRNA splicing. Cellular cofactor for lentiviral integration. This Homo sapiens (Human) protein is PC4 and SFRS1-interacting protein (PSIP1).